We begin with the raw amino-acid sequence, 384 residues long: GTPase Obg (384 aa).

The 159-residue stretch at 1–159 (MKFVDEVEIR…RPLKLELMLL (159 aa)) folds into the Obg domain. Residues 72-94 (NGMGKNCTGRRGNDIVLPVPPGT) form a disordered region. Positions 160–333 (ADVGLLGMPN…LCREVMSYLE (174 aa)) constitute an OBG-type G domain. GTP is bound by residues 166–173 (GMPNAGKS), 191–195 (FTTLI), 213–216 (DIPG), 283–286 (NKVD), and 314–316 (AAL). Positions 173 and 193 each coordinate Mg(2+). Positions 358–384 (EEVLEEEMDDEDDDDDDDHDVEVIYQK) are disordered. Over residues 360–377 (VLEEEMDDEDDDDDDDHD) the composition is skewed to acidic residues.

The protein belongs to the TRAFAC class OBG-HflX-like GTPase superfamily. OBG GTPase family. As to quaternary structure, monomer. It depends on Mg(2+) as a cofactor.

The protein resides in the cytoplasm. An essential GTPase which binds GTP, GDP and possibly (p)ppGpp with moderate affinity, with high nucleotide exchange rates and a fairly low GTP hydrolysis rate. Plays a role in control of the cell cycle, stress response, ribosome biogenesis and in those bacteria that undergo differentiation, in morphogenesis control. The polypeptide is GTPase Obg (Idiomarina loihiensis (strain ATCC BAA-735 / DSM 15497 / L2-TR)).